A 303-amino-acid polypeptide reads, in one-letter code: Small ribosomal subunit protein bS1m (303 aa).

Residue Ser-2 is modified to N-acetylserine. A mitochondrion; not cleaved-targeting transit peptide spans 2 to 13; that stretch reads SFAQILRGSRAM.

The protein belongs to the bacterial ribosomal protein bS1 family. As to quaternary structure, component of the mitochondrial small ribosomal subunit (mt-SSU). Mature yeast 74S mitochondrial ribosomes consist of a small (37S) and a large (54S) subunit. The 37S small subunit contains a 15S ribosomal RNA (15S mt-rRNA) and at least 32 different proteins. The 54S large subunit contains a 21S rRNA (21S mt-rRNA) and at least 45 different proteins. This subunit is mutually exclusive with mug178/small ribosomal subunit protein L51-b.

The protein resides in the mitochondrion. Functionally, component of the mitochondrial ribosome (mitoribosome), a dedicated translation machinery responsible for the synthesis of mitochondrial genome-encoded proteins, including at least some of the essential transmembrane subunits of the mitochondrial respiratory chain. The mitoribosomes are attached to the mitochondrial inner membrane and translation products are cotranslationally integrated into the membrane. bS1m functionally interacts with the 5'-UTR of mitochondrial mRNAs. Plays an essential role in mitochondrial translation. The chain is Small ribosomal subunit protein bS1m (mrp51) from Schizosaccharomyces pombe (strain 972 / ATCC 24843) (Fission yeast).